A 571-amino-acid polypeptide reads, in one-letter code: Cilia- and flagella-associated protein 52 (571 aa).

WD repeat units follow at residues 62-106 (GHGN…LLAR), 109-150 (LHKG…AICG), 156-195 (LNVG…RKIW), 288-327 (QSQG…ETLI), 330-364 (CHFE…TSSN), 366-405 (AHRI…QKLE), 410-449 (EHKS…RNQM), 451-490 (LANT…VIRE), 494-533 (SLSG…VTHV), and 536-571 (GHSG…PYTS).

Belongs to the CFAP52 family. As to quaternary structure, microtubule inner protein component of sperm flagellar doublet microtubules. Interacts with BRCA2. Interacts with the CCT chaperonin complex. Interacts with HSP70. Interacts with AK8. Interacts with CFAP45. Interacts with DNAI1. Interacts with IQDC.

The protein localises to the cytoplasm. Its subcellular location is the cytoskeleton. It localises to the cilium axoneme. The protein resides in the flagellum axoneme. In terms of biological role, microtubule inner protein (MIP) part of the dynein-decorated doublet microtubules (DMTs) in cilia axoneme. Important for proper ciliary and flagellar beating. May act in cooperation with CFAP45 and axonemal dynein subunit DNAH11. May play a role in cell growth and/or survival. The protein is Cilia- and flagella-associated protein 52 of Macaca fascicularis (Crab-eating macaque).